The sequence spans 126 residues: Holo-[acyl-carrier-protein] synthase (126 aa).

Positions 9 and 59 each coordinate Mg(2+).

Belongs to the P-Pant transferase superfamily. AcpS family. The cofactor is Mg(2+).

It localises to the cytoplasm. The catalysed reaction is apo-[ACP] + CoA = holo-[ACP] + adenosine 3',5'-bisphosphate + H(+). Transfers the 4'-phosphopantetheine moiety from coenzyme A to a Ser of acyl-carrier-protein. This Myxococcus xanthus (strain DK1622) protein is Holo-[acyl-carrier-protein] synthase.